Consider the following 170-residue polypeptide: Large ribosomal subunit protein uL18m (170 aa).

It belongs to the universal ribosomal protein uL18 family. As to quaternary structure, component of the mitochondrial ribosome large subunit (39S) which comprises a 16S rRNA and about 50 distinct proteins.

Its subcellular location is the mitochondrion. The sequence is that of Large ribosomal subunit protein uL18m (mrpl-18) from Caenorhabditis elegans.